A 239-amino-acid chain; its full sequence is Large ribosomal subunit protein uL1 (239 aa).

This sequence belongs to the universal ribosomal protein uL1 family. As to quaternary structure, part of the 50S ribosomal subunit.

Binds directly to 23S rRNA. The L1 stalk is quite mobile in the ribosome, and is involved in E site tRNA release. In terms of biological role, protein L1 is also a translational repressor protein, it controls the translation of the L11 operon by binding to its mRNA. This Mycolicibacterium gilvum (strain PYR-GCK) (Mycobacterium gilvum (strain PYR-GCK)) protein is Large ribosomal subunit protein uL1.